Consider the following 382-residue polypeptide: MAKRDYYEVLGVSRGASADELKKAYRTKAKELHPDRNADNPQAEAQFKEVNEAYDVLRDADKKAAYDRYGHAAFEGGMGGGGGARGAYGQQADFASAFSDVFEDLFGDFMGGRGGAARSRAQRGSDLRYNLRVTLDEAYRGVQKTINVPASVACDSCKGTGAEGGAEPVTCPTCSGMGKVRAQQGFFTVERTCPTCNGMGQIVKNPCKSCHGAGRVEKERTLSVNIPAGVETGTRIRLAGEGEAGMRGGPSGDLYIFIEVREHALFQRDGVHLFCRVPVSITAAALGGEVEVPTIDGGSSRVKIPAGSQTGKQMRLRGKGMPALRGGGAGDMLIELAVETPVNLTARQKELLREFEKLSEDNNPEGKSFFSKVKGFWDGMTG.

The J domain maps to 5–70 (DYYEVLGVSR…DKKAAYDRYG (66 aa)). The CR-type zinc-finger motif lies at 141–219 (GVQKTINVPA…CHGAGRVEKE (79 aa)). Residues C154, C157, C171, C174, C193, C196, C207, and C210 each coordinate Zn(2+). CXXCXGXG motif repeat units follow at residues 154–161 (CDSCKGTG), 171–178 (CPTCSGMG), 193–200 (CPTCNGMG), and 207–214 (CKSCHGAG).

It belongs to the DnaJ family. As to quaternary structure, homodimer. Zn(2+) is required as a cofactor.

The protein resides in the cytoplasm. Participates actively in the response to hyperosmotic and heat shock by preventing the aggregation of stress-denatured proteins and by disaggregating proteins, also in an autonomous, DnaK-independent fashion. Unfolded proteins bind initially to DnaJ; upon interaction with the DnaJ-bound protein, DnaK hydrolyzes its bound ATP, resulting in the formation of a stable complex. GrpE releases ADP from DnaK; ATP binding to DnaK triggers the release of the substrate protein, thus completing the reaction cycle. Several rounds of ATP-dependent interactions between DnaJ, DnaK and GrpE are required for fully efficient folding. Also involved, together with DnaK and GrpE, in the DNA replication of plasmids through activation of initiation proteins. In Cereibacter sphaeroides (strain ATCC 17025 / ATH 2.4.3) (Rhodobacter sphaeroides), this protein is Chaperone protein DnaJ.